A 1194-amino-acid chain; its full sequence is MNGHHQQNGVENMMLFEVVKMGKSAMQSVVDDWIEAYKHSKDVALLDLINFFIQCSGCKGVVSGEMFRHMQNSEIIRRMTEEFDEDSGDYPLTMAGPQWKKFKFSFCEFIGVLVRQCQYSIIYDEYMMDTVISLLTGLSDSQVRAFRHTSTLAAMKLMTALVNVALNLSINMDNTQRQYEAERNKMIGKRANDRLELLLQKRKELQENQDEIENMMNAIFKGVFVHRYRDAIAEIRAICIEEIGVWMKMYSDAFLNDSYLKYVGWTMHDKQGEVRLKCLTALQGLYYNRELNTKLELFTSRFKDRIVSMTLDKEYDVAVQAIKLLTLVLQSSDEVLTAEDCENVYHLVYSAHRPVAVAAGEFLYKKLFSCRDPEEDGIMKRRGRLSPNANLVKTLVFFFLESELHEHAAYLVDSMWDCATELLKDWDCMNSLLLDDPLNGEEALTDRQESALIEILLCTVRQAAECHPPVGRGTGKRVLTAKEKKSQMDDKTHLTELFAVSLPQLLAKYSVDAEKVTNLLQLPQYFDLEIYTTGRLEKHLEALLRQIRNIVEKHTDTDVLEACSKTYHALCNEEFTIYNRVDIAKSQLIDELADKFNRLLEDFLQEEEELDEDDAYQVLSTLKRITAFHNAHDLSRWDLFSGNYKLLKTGIENGDMPEQIVVHALQCTHYVILWQLAKFSETGSSKEELITLKRQMRVFCQICQHYLTNVNTAVKEQAFTILCDVLMIFSHQIVVGGREALEPLVYSPDSSLQSELLSFILDHVFIDQDDDNSSSDGQQDDEASKIEALHKRRNLLAAFCKLIVYNVVEMNTAADIFKQYMRYYNDYGDIIKETMSKTRQIDKIQCAKTLILSLQQLFNEMIQEHSYNFDRSSPTFSAIKELARRFALTFGLDQLKTREAIAMLHKDGIEFAFKEPSPQGEAHPPLNMAFLDILSEFSSKLLRQDKKTVYAYLERFMTFQMSLRREDVWLPLMSYRNSLLAGGDDDTMSVMSGMSGRGSSTRSKKIKPPTGKRKLPEAEESSSSDSMWLNREQTMNTPVMLQTPQLTSTIMREPKRLRPEESYMPVYPMQPEHHQPSLDYNTQVTWMLAQRQQEEAARQQQERAAMNYVKLRSNLQHAIRRNTGLMEDDEEPIVEDVMMSSEGRIEDLNEGMDFDTMDIDLPPSKNRRERTELKPDFFDPASIMDESVLGVSMF.

The 86-residue stretch at 224–309 (FVHRYRDAIA…SRFKDRIVSM (86 aa)) folds into the SCD domain. The tract at residues 986–1027 (DTMSVMSGMSGRGSSTRSKKIKPPTGKRKLPEAEESSSSDSM) is disordered. The segment covering 988-1001 (MSVMSGMSGRGSST) has biased composition (low complexity). Positions 1002-1013 (RSKKIKPPTGKR) are enriched in basic residues.

This sequence belongs to the SCC3 family. Part of the cohesin complex which is composed of a heterodimer between a SMC1 protein (SMC1A or SMC1B) and SMC3, which are attached via their hinge domain, and RAD21 which link them at their heads, and one STAG protein (STAG1, STAG2 or STAG3). In cohesin complexes, STAG2 is mutually exclusive with STAG1 and STAG3. Interacts directly with RAD21 in cohesin complex. Post-translationally, phosphorylated by PLK1. The large dissociation of cohesin from chromosome arms during prophase is partly due to its phosphorylation.

The protein resides in the nucleus. It localises to the chromosome. The protein localises to the centromere. In terms of biological role, component of cohesin complex, a complex required for the cohesion of sister chromatids after DNA replication. The cohesin complex apparently forms a large proteinaceous ring within which sister chromatids can be trapped. At anaphase, the complex is cleaved and dissociates from chromatin, allowing sister chromatids to segregate. The cohesin complex may also play a role in spindle pole assembly during mitosis. The polypeptide is Cohesin subunit SA-2 (stag2) (Xenopus laevis (African clawed frog)).